Consider the following 456-residue polypeptide: Putative gluconeogenesis factor (456 aa).

It belongs to the gluconeogenesis factor family.

Its subcellular location is the cytoplasm. In terms of biological role, required for morphogenesis under gluconeogenic growth conditions. This Nostoc sp. (strain PCC 7120 / SAG 25.82 / UTEX 2576) protein is Putative gluconeogenesis factor.